Reading from the N-terminus, the 329-residue chain is Glycerol-3-phosphate dehydrogenase [NAD(P)+] (329 aa).

The NADPH site is built by Ser-13, Trp-14, His-34, and Lys-105. Residues Lys-105, Gly-134, and Ser-136 each contribute to the sn-glycerol 3-phosphate site. Ala-138 contributes to the NADPH binding site. Sn-glycerol 3-phosphate-binding residues include Lys-189, Asp-242, Ser-252, Arg-253, and Asn-254. The active-site Proton acceptor is Lys-189. Arg-253 serves as a coordination point for NADPH. NADPH-binding residues include Val-277 and Glu-279.

Belongs to the NAD-dependent glycerol-3-phosphate dehydrogenase family.

Its subcellular location is the cytoplasm. The enzyme catalyses sn-glycerol 3-phosphate + NAD(+) = dihydroxyacetone phosphate + NADH + H(+). It carries out the reaction sn-glycerol 3-phosphate + NADP(+) = dihydroxyacetone phosphate + NADPH + H(+). The protein operates within membrane lipid metabolism; glycerophospholipid metabolism. Functionally, catalyzes the reduction of the glycolytic intermediate dihydroxyacetone phosphate (DHAP) to sn-glycerol 3-phosphate (G3P), the key precursor for phospholipid synthesis. This is Glycerol-3-phosphate dehydrogenase [NAD(P)+] from Legionella pneumophila (strain Lens).